Here is a 445-residue protein sequence, read N- to C-terminus: Na(+)-translocating NADH-quinone reductase subunit A (445 aa).

Belongs to the NqrA family. Composed of six subunits; NqrA, NqrB, NqrC, NqrD, NqrE and NqrF.

The catalysed reaction is a ubiquinone + n Na(+)(in) + NADH + H(+) = a ubiquinol + n Na(+)(out) + NAD(+). In terms of biological role, NQR complex catalyzes the reduction of ubiquinone-1 to ubiquinol by two successive reactions, coupled with the transport of Na(+) ions from the cytoplasm to the periplasm. NqrA to NqrE are probably involved in the second step, the conversion of ubisemiquinone to ubiquinol. The polypeptide is Na(+)-translocating NADH-quinone reductase subunit A (Marinomonas sp. (strain MWYL1)).